The chain runs to 617 residues: Melatonin-related receptor (617 aa).

At 1–30 the chain is on the extracellular side; that stretch reads MGPTLAVPTPYGCIGCKLPQPEYPPALIIF. Residues 31-51 form a helical membrane-spanning segment; it reads MFCAMVITIVVDLIGNSMVIL. Residues 52-64 lie on the Cytoplasmic side of the membrane; it reads AVTKNKKLRNSGN. A helical membrane pass occupies residues 65-85; it reads IFVVSLSVADMLVAIYPYPLM. The Extracellular portion of the chain corresponds to 86–103; sequence LHAMSIGGWDLSQLQCQM. Residues cysteine 101 and cysteine 178 are joined by a disulfide bond. The helical transmembrane segment at 104-124 threads the bilayer; that stretch reads VGFITGLSVVGSIFNIVAIAI. The Cytoplasmic portion of the chain corresponds to 125–143; the sequence is NRYCYICHSLQYERIFSVR. A helical transmembrane segment spans residues 144-164; it reads NTCIYLVITWIMTVLAVLPNM. Residues 165–188 lie on the Extracellular side of the membrane; it reads YIGTIEYDPRTYTCIFNYLNNPVF. Residues 189–209 traverse the membrane as a helical segment; that stretch reads TVTIVCIHFVLPLLIVGFCYV. The Cytoplasmic portion of the chain corresponds to 210 to 239; the sequence is RIWTKVLAARDPAGQNPDNQLAEVRNFLTM. The helical transmembrane segment at 240–260 threads the bilayer; that stretch reads FVIFLLFAVCWCPINVLTVLV. Topologically, residues 261 to 273 are extracellular; it reads AVSPKEMAGKIPN. The chain crosses the membrane as a helical span at residues 274 to 294; the sequence is WLYLAAYFIAYFNSCLNAVIY. Residues 295–617 are Cytoplasmic-facing; it reads GLLNENFRRE…VEDDPDEMAV (323 aa). Disordered stretches follow at residues 340–438 and 464–596; these read AHAR…ATVY and SVHF…VTTS. Over residues 341 to 353 the composition is skewed to basic and acidic residues; that stretch reads HARDQAREQDRAH. Residues 485–500 are compositionally biased toward polar residues; it reads GSHSKSAFSAATSHPK.

Belongs to the G-protein coupled receptor 1 family. As to quaternary structure, homodimer, and heterodimer with MTNR1A and MTNR1B. Interacts with KAT5. Interacts with RTN4 isoform A/NOGO-A. Interacts with TGFBR1. Interacts with GTF2I. Cleaved by CAPN1 in a calcium-dependent manner. As to expression, hypothalamus and pituitary.

The protein localises to the cell membrane. It localises to the postsynaptic density. The protein resides in the nucleus. Its function is as follows. G protein-coupled receptor that plays a role in numerous physiological processes including regulation of energy metabolism, neurite outgrowth or cell migration. Promotes self-renewal and neuronal differentiation of neural progenitor cells through activation of the NOTCH and WNT/beta-catenin signaling pathways. Modulates the KAT5-dependent glucocorticoid receptor signaling by modulating KAT5 subcellular compartmentalisation. Also plays a role in the activation TGFBR1 in the absence of TGFBR2 by interfering with FKBP1A binding to TGFBR1, leading to induction of both canonical and non-canonical SMAD signaling pathways resulting in inhibition of proliferation or promotion of migration. In terms of biological role, upon cleavage by CAPN1, functions as a scaffold in the nucleus for interacting partners such as GTF2I to promote FOS promoter activation. In Homo sapiens (Human), this protein is Melatonin-related receptor (GPR50).